We begin with the raw amino-acid sequence, 121 residues long: Ig heavy chain V region MPC 11 (121 aa).

The 112-residue stretch at 1 to 112 (EAQLQQSGAE…NSSPYFDSWG (112 aa)) folds into the Ig-like domain.

In Mus musculus (Mouse), this protein is Ig heavy chain V region MPC 11.